We begin with the raw amino-acid sequence, 396 residues long: Elongation factor Tu 1 (396 aa).

The 197-residue stretch at 10-206 (KPHINVGTIG…VLDSYIPEPQ (197 aa)) folds into the tr-type G domain. Positions 19–26 (GHVDHGKT) are G1. A GTP-binding site is contributed by 19-26 (GHVDHGKT). Position 26 (threonine 26) interacts with Mg(2+). The G2 stretch occupies residues 60 to 64 (GITIN). Residues 81–84 (DCPG) form a G3 region. GTP is bound by residues 81–85 (DCPGH) and 136–139 (NKAD). The interval 136–139 (NKAD) is G4. Positions 174 to 176 (SAL) are G5.

This sequence belongs to the TRAFAC class translation factor GTPase superfamily. Classic translation factor GTPase family. EF-Tu/EF-1A subfamily. In terms of assembly, monomer.

Its subcellular location is the cytoplasm. The enzyme catalyses GTP + H2O = GDP + phosphate + H(+). Functionally, GTP hydrolase that promotes the GTP-dependent binding of aminoacyl-tRNA to the A-site of ribosomes during protein biosynthesis. In Nitrosomonas eutropha (strain DSM 101675 / C91 / Nm57), this protein is Elongation factor Tu 1.